The sequence spans 251 residues: MQIDFNSDMGESFGAWTIGDGVDTELMAFISSANIATGFHAGDPSTMRRTIEQAKRLGVAIGAHPGFRDLVGFGRRHINAPAQELVDDMLYQLGALRELARVQGVPLQHFKPHGALYMHLARDEEAARLLVENLQRLEPDLLLYCMPGSVICNVAQELGQPVVREFYADRAYDLSGSIVFTRNVRAHDPAEVAARVIRACQQGLVRTVEGDDLAIQFDSICLHSDTPGALALAQATRQALDGAGIEVRTPR.

Belongs to the LamB/PxpA family. Forms a complex composed of PxpA, PxpB and PxpC.

It carries out the reaction 5-oxo-L-proline + ATP + 2 H2O = L-glutamate + ADP + phosphate + H(+). Catalyzes the cleavage of 5-oxoproline to form L-glutamate coupled to the hydrolysis of ATP to ADP and inorganic phosphate. The chain is 5-oxoprolinase subunit A 2 from Pseudomonas syringae pv. tomato (strain ATCC BAA-871 / DC3000).